Consider the following 134-residue polypeptide: uncharacterized protein (134 aa).

A run of 3 helical transmembrane segments spans residues 26–46, 55–75, and 101–121; these read VAVF…GNIG, LLKF…QIIV, and YAPM…GLIL.

It localises to the membrane. This is an uncharacterized protein from Dictyostelium discoideum (Social amoeba).